The primary structure comprises 292 residues: MGDGGAERDRGPKRREEPGGRSGRHGEHRGAEDLRADTGSASPREIAGTSASSPAGSRESGGDSDGQQALGETDHCRRILVRDAKGTIREIVLPKGLDLDRPKRTRTSFTAEQLYRLEMEFQRCQYVVGRERTELARQLNLSETQVKVWFQNRRTKQKKDQSRDLEKRASSSASEAFATSNVLRLLEQGRLLSVPRAPSLLALTPGLPGLPASHRGTSLVDPRNSSPRLNPMPSASASSPLPPPLPAICFSSAPLLDLPAGYKLGSSAFEPYSRLEQQKVGSPGQSDKKADI.

Positions 1–36 (MGDGGAERDRGPKRREEPGGRSGRHGEHRGAEDLRA) are enriched in basic and acidic residues. Residues 1–74 (MGDGGAERDR…DGQQALGETD (74 aa)) are disordered. A DNA-binding region (homeobox) is located at residues 102–161 (PKRTRTSFTAEQLYRLEMEFQRCQYVVGRERTELARQLNLSETQVKVWFQNRRTKQKKDQ). The segment at 207 to 242 (LPGLPASHRGTSLVDPRNSSPRLNPMPSASASSPLP) is disordered.

It belongs to the EMX homeobox family. As to expression, expressed in the developing and mature retina.

Its subcellular location is the nucleus. Functionally, transcription factor that may function in dorsoventral specification of the forebrain. Regulates the expression of Wnt signaling antagonists including the expression of a truncated TCF7L2 isoform that cannot bind CTNNB1 and acts therefore as a potent dominant-negative Wnt antagonist. Plays a crucial role in eye development and, in particular, in the specification of the ventral optic vesicle. May be a regulator of axial polarization in the retina. The protein is Ventral anterior homeobox 2 (Vax2) of Mus musculus (Mouse).